Reading from the N-terminus, the 193-residue chain is MKVIKGLTAGLIFLFLCACGGQQIKDPLNYEVEPFTFQNQDGKNVSLESLKGEVWLADFIFTNCETICPPMTAHMTDLQKKLKAENIDVRIISFSVDPENDKPKQLKKFAANYPLSFDNWDFLTGYSQSEIEEFALKSFKAIVKKPEGEDQVIHQSSFYLVGPDGKVLKDYNGVENTPYDDIISDVKSASTLK.

The first 18 residues, 1–18 (MKVIKGLTAGLIFLFLCA), serve as a signal peptide directing secretion. Residue Cys-19 is the site of N-palmitoyl cysteine attachment. A lipid anchor (S-diacylglycerol cysteine) is attached at Cys-19. One can recognise a Thioredoxin domain in the interval 26 to 191 (DPLNYEVEPF…IISDVKSAST (166 aa)). Cys-64, Cys-68, and His-154 together coordinate Cu cation.

It belongs to the SCO1/2 family. As to quaternary structure, monomer.

It localises to the cell membrane. Necessary for insertion of copper into the active site of cytochrome c oxidase. May play a role in copper homeostasis or redox signaling. This chain is SCO1 protein homolog (ypmQ), found in Bacillus subtilis (strain 168).